A 298-amino-acid polypeptide reads, in one-letter code: N-acetylmuramic acid 6-phosphate etherase (298 aa).

The 164-residue stretch at 54–217 (CISAIKNHGR…STVTMIKLGK (164 aa)) folds into the SIS domain. Glutamate 82 serves as the catalytic Proton donor. Glutamate 113 is a catalytic residue.

This sequence belongs to the GCKR-like family. MurNAc-6-P etherase subfamily. As to quaternary structure, homodimer.

The catalysed reaction is N-acetyl-D-muramate 6-phosphate + H2O = N-acetyl-D-glucosamine 6-phosphate + (R)-lactate. Its pathway is amino-sugar metabolism; N-acetylmuramate degradation. Specifically catalyzes the cleavage of the D-lactyl ether substituent of MurNAc 6-phosphate, producing GlcNAc 6-phosphate and D-lactate. This Petrotoga mobilis (strain DSM 10674 / SJ95) protein is N-acetylmuramic acid 6-phosphate etherase.